The chain runs to 94 residues: Aspartyl/glutamyl-tRNA(Asn/Gln) amidotransferase subunit C (94 aa).

This sequence belongs to the GatC family. Heterotrimer of A, B and C subunits.

It carries out the reaction L-glutamyl-tRNA(Gln) + L-glutamine + ATP + H2O = L-glutaminyl-tRNA(Gln) + L-glutamate + ADP + phosphate + H(+). The enzyme catalyses L-aspartyl-tRNA(Asn) + L-glutamine + ATP + H2O = L-asparaginyl-tRNA(Asn) + L-glutamate + ADP + phosphate + 2 H(+). In terms of biological role, allows the formation of correctly charged Asn-tRNA(Asn) or Gln-tRNA(Gln) through the transamidation of misacylated Asp-tRNA(Asn) or Glu-tRNA(Gln) in organisms which lack either or both of asparaginyl-tRNA or glutaminyl-tRNA synthetases. The reaction takes place in the presence of glutamine and ATP through an activated phospho-Asp-tRNA(Asn) or phospho-Glu-tRNA(Gln). The sequence is that of Aspartyl/glutamyl-tRNA(Asn/Gln) amidotransferase subunit C from Campylobacter jejuni subsp. doylei (strain ATCC BAA-1458 / RM4099 / 269.97).